A 102-amino-acid chain; its full sequence is uncharacterized protein (102 aa).

Residues 1–41 (MAAPRQIAFYGKGGTGKPKRKPEPVTASKEDRCLGSPSKNK) are disordered.

The protein to the N-terminal of nitrogenase iron protein (NifH). Has lost the ATP-binding site.

This protein is either not expressed, expressed at low levels or rapidly degraded. This is an uncharacterized protein from Rhizobium meliloti (Ensifer meliloti).